Consider the following 189-residue polypeptide: Leucine repeat adapter protein 25 (189 aa).

Ser28 bears the Phosphoserine mark. The segment at 55-81 (LSRAARAPDGPRHAAGSANLGSAAGPR) is disordered. A compositionally biased stretch (low complexity) spans 68-79 (AAGSANLGSAAG). Residues 86–114 (LDSALAALRKEMVGLRQLDMSLLCQLWGL) form an LRR repeat. The tract at residues 141–174 (DSSYPPDAGLSDDDEPPDASLPPDPPPLTVPQTH) is disordered. Positions 159–169 (ASLPPDPPPLT) are enriched in pro residues. At Ser188 the chain carries Phosphoserine.

Belongs to the FAM89 family. As to quaternary structure, interacts with SKI. Interacts (via LRR repeat) with CDC42BPA (via AGC-kinase C-terminal domain) and CDC42BPB (via AGC-kinase C-terminal domain). Interacts (via LRR repeat) with LIMK1 (via LIM zinc-binding domains). Forms a tripartite complex with CDC42BPA, CDC42BPB and LIMK1.

It is found in the cytoplasm. The protein resides in the cell projection. Its subcellular location is the lamellipodium. Functionally, negatively regulates TGF-beta-induced signaling; in cooperation with SKI prevents the translocation of SMAD2 from the nucleus to the cytoplasm in response to TGF-beta. Acts as an adapter that mediates the specific recognition of LIMK1 by CDC42BPA and CDC42BPB in the lamellipodia. LRAP25-mediated CDC42BPA/CDC42BPB targeting to LIMK1 and the lamellipodium results in LIMK1 activation and the subsequent phosphorylation of CFL1 which is important for lamellipodial F-actin regulation. The sequence is that of Leucine repeat adapter protein 25 from Rattus norvegicus (Rat).